Reading from the N-terminus, the 411-residue chain is Serine--tRNA ligase (411 aa).

226 to 228 (TSE) is a binding site for L-serine. 257 to 259 (RKE) is a binding site for ATP. L-serine is bound at residue glutamate 280. 344 to 347 (EISS) contributes to the ATP binding site. Residue serine 379 coordinates L-serine.

The protein belongs to the class-II aminoacyl-tRNA synthetase family. Type-1 seryl-tRNA synthetase subfamily. In terms of assembly, homodimer. The tRNA molecule binds across the dimer.

The protein localises to the cytoplasm. The catalysed reaction is tRNA(Ser) + L-serine + ATP = L-seryl-tRNA(Ser) + AMP + diphosphate + H(+). It carries out the reaction tRNA(Sec) + L-serine + ATP = L-seryl-tRNA(Sec) + AMP + diphosphate + H(+). The protein operates within aminoacyl-tRNA biosynthesis; selenocysteinyl-tRNA(Sec) biosynthesis; L-seryl-tRNA(Sec) from L-serine and tRNA(Sec): step 1/1. Functionally, catalyzes the attachment of serine to tRNA(Ser). Is also able to aminoacylate tRNA(Sec) with serine, to form the misacylated tRNA L-seryl-tRNA(Sec), which will be further converted into selenocysteinyl-tRNA(Sec). The chain is Serine--tRNA ligase from Campylobacter jejuni subsp. jejuni serotype O:2 (strain ATCC 700819 / NCTC 11168).